A 277-amino-acid chain; its full sequence is Adenylate kinase (277 aa).

53–58 is a binding site for ATP; that stretch reads GAGKGT. The interval 73–102 is NMP; that stretch reads ATGDMLRAQVAAKTPLGREAKKIMDAGGLV. AMP is bound by residues threonine 74, arginine 79, 100–102, 129–132, and glutamine 136; these read GLV and GFPR. Residues 170 to 207 form an LID region; that stretch reads GRLVHPASGRSYHKIFNPPKAPMTDDATGEPLIQRSDD. Residues arginine 171 and 180–181 each bind ATP; that span reads SY. Arginine 204 and arginine 215 together coordinate AMP. Glutamine 243 contacts ATP.

It belongs to the adenylate kinase family. AK2 subfamily. In terms of assembly, monomer.

It localises to the cytoplasm. It is found in the cytosol. The protein localises to the mitochondrion intermembrane space. The enzyme catalyses AMP + ATP = 2 ADP. In terms of biological role, catalyzes the reversible transfer of the terminal phosphate group between ATP and AMP. Plays an important role in cellular energy homeostasis and in adenine nucleotide metabolism. Adenylate kinase activity is critical for regulation of the phosphate utilization and the AMP de novo biosynthesis pathways. This is Adenylate kinase from Phaeosphaeria nodorum (strain SN15 / ATCC MYA-4574 / FGSC 10173) (Glume blotch fungus).